We begin with the raw amino-acid sequence, 101 residues long: Protein RALF-like 14 (101 aa).

An N-terminal signal peptide occupies residues 1–21 (MKLLIFAVIISVVLFPVLVSS). A propeptide spans 22-56 (RTIKCDQLSGKCINGEEKEIMNMRLGLDVSSRRIL) (removed in mature form). An intrachain disulfide couples C90 to C96.

Belongs to the plant rapid alkalinization factor (RALF) family. In terms of processing, proteolytically cleaved, probably by S1P, a subtilisin-like serine protease (subtilase).

Its subcellular location is the secreted. Functionally, cell signaling peptide that may regulate plant stress, growth, and development. Mediates a rapid alkalinization of extracellular space by mediating a transient increase in the cytoplasmic Ca(2+) concentration leading to a calcium-dependent signaling events through a cell surface receptor and a concomitant activation of some intracellular mitogen-activated protein kinases. The chain is Protein RALF-like 14 (RALFL14) from Arabidopsis thaliana (Mouse-ear cress).